We begin with the raw amino-acid sequence, 931 residues long: Dual O-methyltransferase/FAD-dependent monooxygenase elcB (931 aa).

The segment at 1 to 463 (MAASTGLSTV…TTDKARPNGD (463 aa)) is O-methyltransferase. Residue Asp-254 participates in S-adenosyl-L-methionine binding. The active-site Proton acceptor is the His-304. The interval 455 to 474 (TDKARPNGDTTHSGQASIPN) is disordered. Residues 462 to 474 (GDTTHSGQASIPN) show a composition bias toward polar residues. Positions 464–931 (TTHSGQASIP…TFEELDVAEL (468 aa)) are FAD-dependent monooxygenase. Residues Glu-520, Arg-604, Asp-836, and Ala-849 each coordinate FAD.

The protein in the C-terminal section; belongs to the paxM FAD-dependent monooxygenase family. This sequence in the N-terminal section; belongs to the class I-like SAM-binding methyltransferase superfamily. Cation-independent O-methyltransferase family. COMT subfamily.

The catalysed reaction is nor-toralactone + S-adenosyl-L-methionine = toralactone + S-adenosyl-L-homocysteine + H(+). The enzyme catalyses toralactone + NADH + O2 + H(+) = 1-(3,4,5-trihydroxy-7-methoxynaphthalen-2-yl)propan-2-one + CO2 + NAD(+). It participates in secondary metabolite biosynthesis. In terms of biological role, dual O-methyltransferase/FAD-dependent monooxygenase; part of the gene cluster that mediates the biosynthesis of elsinochrome C, a perelyenequinone phytotoxin structurally similar to cercosporin. The first step of elsinochrome C biosynthesis is performed by the polyketide synthase elcA which catalyzes the formation of nor-toralactone. The starter unit acyltransferase (SAT) domain of elcA initiates polyketide extension by the selective utilization of acetyl-CoA, which is elongated to the heptaketide in the beta-ketoacyl synthase (KS) domain by successive condensations with six malonyl units introduced by the malonyl acyltransferase (MAT) domain. The product template (PT) domain catalyzes C4-C9 and C2-C11 aldol cyclizations and dehydrations to a trihydroxynaphthalene, which is thought to be delivered to the thioesterase (TE) domain for product release. The bifunctional enzyme elcB then methylates nor-toralactone to toralactone before conducting an unusual oxidative aromatic ring opening. The next step in perylenequinone biosynthesis is an O-methylation at the nascent OH-6 of the elcB product performed by the O-methyltransferase elcD. The oxidative coupling of the two monomeric naphthol units in perylenequinone biosynthesis is catalyzed by the FAD-dependent monooxygenase elcE and the multicopper oxidase elcG. ElcG might catalyze the first intermolecular coupling in a regio- and stereo-selective manner via a phenol radical coupling mechanism and the elcE could forge the second C-C bond intramolecularly via a hydride transfer mechanism. The fasciclin domain-containing protein elcF might also play a role duting this step. The last piece of the puzzle in the biosynthesis of elsinochrome C is the additional annulation by enolate coupling to afford the dihydrobenzo(ghi)perylenequinone system, catalyzed by the FAD-dependent monooxygenase elcH. In Phaeosphaeria nodorum (strain SN15 / ATCC MYA-4574 / FGSC 10173) (Glume blotch fungus), this protein is Dual O-methyltransferase/FAD-dependent monooxygenase elcB.